Consider the following 426-residue polypeptide: 3-phosphoshikimate 1-carboxyvinyltransferase (426 aa).

3-phosphoshikimate contacts are provided by lysine 22, serine 23, and arginine 27. Lysine 22 serves as a coordination point for phosphoenolpyruvate. The phosphoenolpyruvate site is built by glycine 96 and arginine 124. The 3-phosphoshikimate site is built by serine 170, serine 171, glutamine 172, serine 198, aspartate 314, asparagine 337, and lysine 341. Glutamine 172 serves as a coordination point for phosphoenolpyruvate. Catalysis depends on aspartate 314, which acts as the Proton acceptor. Positions 345, 387, and 412 each coordinate phosphoenolpyruvate.

Belongs to the EPSP synthase family. In terms of assembly, monomer.

The protein localises to the cytoplasm. It catalyses the reaction 3-phosphoshikimate + phosphoenolpyruvate = 5-O-(1-carboxyvinyl)-3-phosphoshikimate + phosphate. It functions in the pathway metabolic intermediate biosynthesis; chorismate biosynthesis; chorismate from D-erythrose 4-phosphate and phosphoenolpyruvate: step 6/7. Its function is as follows. Catalyzes the transfer of the enolpyruvyl moiety of phosphoenolpyruvate (PEP) to the 5-hydroxyl of shikimate-3-phosphate (S3P) to produce enolpyruvyl shikimate-3-phosphate and inorganic phosphate. The protein is 3-phosphoshikimate 1-carboxyvinyltransferase of Shewanella piezotolerans (strain WP3 / JCM 13877).